The chain runs to 787 residues: Endonuclease MutS2 (787 aa).

Residue 331-338 (GPNTGGKT) participates in ATP binding. The Smr domain occupies 711–786 (IDVRGKTSDD…EQGVTVVELK (76 aa)).

This sequence belongs to the DNA mismatch repair MutS family. MutS2 subfamily. In terms of assembly, homodimer. Binds to stalled ribosomes, contacting rRNA.

Functionally, endonuclease that is involved in the suppression of homologous recombination and thus may have a key role in the control of bacterial genetic diversity. Its function is as follows. Acts as a ribosome collision sensor, splitting the ribosome into its 2 subunits. Detects stalled/collided 70S ribosomes which it binds and splits by an ATP-hydrolysis driven conformational change. Acts upstream of the ribosome quality control system (RQC), a ribosome-associated complex that mediates the extraction of incompletely synthesized nascent chains from stalled ribosomes and their subsequent degradation. Probably generates substrates for RQC. This Caldicellulosiruptor bescii (strain ATCC BAA-1888 / DSM 6725 / KCTC 15123 / Z-1320) (Anaerocellum thermophilum) protein is Endonuclease MutS2.